The primary structure comprises 142 residues: MKKQSGFTLIELMIVVAIVAILAAIALPAYQTYTKKAKFTEVVSATGTYKSALEVCFQTVGSLLNCTNGTNGVPPAAGASGLVTSVAVSGNTASAATITATGDATTFGATSNVYIMTAAGSNGQIIWTAPASGSTCAGAGFC.

Positions 1–6 (MKKQSG) are cleaved as a propeptide — leader sequence. Phenylalanine 7 is subject to N-methylphenylalanine. A helical transmembrane segment spans residues 7 to 27 (FTLIELMIVVAIVAILAAIAL).

This sequence belongs to the N-Me-Phe pilin family.

It localises to the membrane. Major component of the type IV (TAP) pilus. Aeromonas hydrophila possesses two distinct families of type IV pili: the bundle-forming pilus (Bfp) and the type IV pilus (Tap). The polypeptide is Type IV pilus subunit protein TapA (tapA) (Aeromonas hydrophila).